A 124-amino-acid chain; its full sequence is Small ribosomal subunit protein uS12 (124 aa).

The segment at 1-28 (MPTIQQLIRTERQSSKAKTKSPALKSCP) is disordered. Asp89 carries the 3-methylthioaspartic acid modification. The tract at residues 104–124 (TAGVKDRRQSRSKYGAKTPKE) is disordered.

It belongs to the universal ribosomal protein uS12 family. In terms of assembly, part of the 30S ribosomal subunit. Contacts proteins S8 and S17. May interact with IF1 in the 30S initiation complex.

With S4 and S5 plays an important role in translational accuracy. Functionally, interacts with and stabilizes bases of the 16S rRNA that are involved in tRNA selection in the A site and with the mRNA backbone. Located at the interface of the 30S and 50S subunits, it traverses the body of the 30S subunit contacting proteins on the other side and probably holding the rRNA structure together. The combined cluster of proteins S8, S12 and S17 appears to hold together the shoulder and platform of the 30S subunit. This Synechococcus sp. (strain WH7803) protein is Small ribosomal subunit protein uS12.